The chain runs to 417 residues: Arginine biosynthesis bifunctional protein ArgJ (417 aa).

Substrate-binding residues include T162, K188, T199, E289, N412, and S417. The Nucleophile role is filled by T199.

It belongs to the ArgJ family. Heterotetramer of two alpha and two beta chains.

Its subcellular location is the cytoplasm. It carries out the reaction N(2)-acetyl-L-ornithine + L-glutamate = N-acetyl-L-glutamate + L-ornithine. It catalyses the reaction L-glutamate + acetyl-CoA = N-acetyl-L-glutamate + CoA + H(+). Its pathway is amino-acid biosynthesis; L-arginine biosynthesis; L-ornithine and N-acetyl-L-glutamate from L-glutamate and N(2)-acetyl-L-ornithine (cyclic): step 1/1. The protein operates within amino-acid biosynthesis; L-arginine biosynthesis; N(2)-acetyl-L-ornithine from L-glutamate: step 1/4. Functionally, catalyzes two activities which are involved in the cyclic version of arginine biosynthesis: the synthesis of N-acetylglutamate from glutamate and acetyl-CoA as the acetyl donor, and of ornithine by transacetylation between N(2)-acetylornithine and glutamate. The sequence is that of Arginine biosynthesis bifunctional protein ArgJ from Nitrobacter winogradskyi (strain ATCC 25391 / DSM 10237 / CIP 104748 / NCIMB 11846 / Nb-255).